The following is a 144-amino-acid chain: Large ribosomal subunit protein uL11m (144 aa).

A mitochondrion-targeting transit peptide spans 1–32 (MASTRTTIIKLIVPAGKATPTPPIGPALGARG).

The protein belongs to the universal ribosomal protein uL11 family. In terms of assembly, component of the mitochondrial large ribosomal subunit (mt-LSU). Mature yeast 74S mitochondrial ribosomes consist of a small (37S) and a large (54S) subunit. The 37S small subunit contains a 15S ribosomal RNA (15S mt-rRNA) and at least 32 different proteins. The 54S large subunit contains a 21S rRNA (21S mt-rRNA) and at least 45 different proteins.

It localises to the mitochondrion. Its subcellular location is the cytoplasm. Its function is as follows. Component of the mitochondrial ribosome (mitoribosome), a dedicated translation machinery responsible for the synthesis of mitochondrial genome-encoded proteins, including at least some of the essential transmembrane subunits of the mitochondrial respiratory chain. The mitoribosomes are attached to the mitochondrial inner membrane and translation products are cotranslationally integrated into the membrane. This Schizosaccharomyces pombe (strain 972 / ATCC 24843) (Fission yeast) protein is Large ribosomal subunit protein uL11m.